The following is a 161-amino-acid chain: MTELKIKTEKVVKQLTKESLKPVLKVPKAKIDNASQFYATGKRKNAIARVWLKVGKGKIVVNNKILNQYFPSETYIKTILQPFLLTKTIDQYDVICTVRGGGISGQKGAILHGISKALDKSAPCFHAILRKGGLLTRDSRVVERKKYGQRKARKKTQFSKR.

This sequence belongs to the universal ribosomal protein uS9 family.

The protein is Small ribosomal subunit protein uS9 of Rickettsia typhi (strain ATCC VR-144 / Wilmington).